The primary structure comprises 149 residues: Transcriptional repressor NrdR (149 aa).

Residues 3–34 fold into a zinc finger; that stretch reads CPFCAAEETKVVDSRLAADGYQIRRRRECTSC. The 91-residue stretch at 49 to 139 folds into the ATP-cone domain; that stretch reads PYVIKNNGNR…VYLSFDDIEE (91 aa).

The protein belongs to the NrdR family. Zn(2+) serves as cofactor.

Negatively regulates transcription of bacterial ribonucleotide reductase nrd genes and operons by binding to NrdR-boxes. The sequence is that of Transcriptional repressor NrdR from Actinobacillus pleuropneumoniae serotype 3 (strain JL03).